Here is a 404-residue protein sequence, read N- to C-terminus: S-adenosylmethionine synthase (404 aa).

Histidine 18 serves as a coordination point for ATP. Aspartate 20 is a Mg(2+) binding site. Glutamate 46 contacts K(+). 2 residues coordinate L-methionine: glutamate 59 and glutamine 102. Residues 102-112 (QSPDIAQGVDT) form a flexible loop region. Residues 177–179 (DGK), 249–250 (KF), aspartate 258, 264–265 (RK), alanine 281, and lysine 285 each bind ATP. Residue aspartate 258 participates in L-methionine binding. Lysine 289 is an L-methionine binding site.

It belongs to the AdoMet synthase family. As to quaternary structure, homotetramer; dimer of dimers. The cofactor is Mg(2+). K(+) is required as a cofactor.

The protein resides in the cytoplasm. It catalyses the reaction L-methionine + ATP + H2O = S-adenosyl-L-methionine + phosphate + diphosphate. The protein operates within amino-acid biosynthesis; S-adenosyl-L-methionine biosynthesis; S-adenosyl-L-methionine from L-methionine: step 1/1. Its function is as follows. Catalyzes the formation of S-adenosylmethionine (AdoMet) from methionine and ATP. The overall synthetic reaction is composed of two sequential steps, AdoMet formation and the subsequent tripolyphosphate hydrolysis which occurs prior to release of AdoMet from the enzyme. The sequence is that of S-adenosylmethionine synthase from Nocardia farcinica (strain IFM 10152).